The following is a 436-amino-acid chain: Adenylosuccinate synthetase (436 aa).

GTP contacts are provided by residues Gly-13–Lys-19 and Gly-41–Thr-43. The active-site Proton acceptor is the Asp-14. Asp-14 and Gly-41 together coordinate Mg(2+). IMP is bound by residues Asp-14 to Lys-17, Asn-39 to His-42, Thr-131, Arg-145, Gln-226, Thr-241, and Arg-309. The active-site Proton donor is His-42. Thr-305 to Arg-311 contacts substrate. Residues Arg-311, Lys-337–Asp-339, and Ser-419–Gly-421 each bind GTP.

It belongs to the adenylosuccinate synthetase family. Homodimer. It depends on Mg(2+) as a cofactor.

It is found in the cytoplasm. It carries out the reaction IMP + L-aspartate + GTP = N(6)-(1,2-dicarboxyethyl)-AMP + GDP + phosphate + 2 H(+). Its pathway is purine metabolism; AMP biosynthesis via de novo pathway; AMP from IMP: step 1/2. Functionally, plays an important role in the de novo pathway of purine nucleotide biosynthesis. Catalyzes the first committed step in the biosynthesis of AMP from IMP. This chain is Adenylosuccinate synthetase, found in Aromatoleum aromaticum (strain DSM 19018 / LMG 30748 / EbN1) (Azoarcus sp. (strain EbN1)).